The sequence spans 457 residues: UDP-N-acetylmuramate--L-alanine ligase (457 aa).

Gly-109 to Thr-115 contributes to the ATP binding site.

The protein belongs to the MurCDEF family.

The protein resides in the cytoplasm. It catalyses the reaction UDP-N-acetyl-alpha-D-muramate + L-alanine + ATP = UDP-N-acetyl-alpha-D-muramoyl-L-alanine + ADP + phosphate + H(+). It functions in the pathway cell wall biogenesis; peptidoglycan biosynthesis. Its function is as follows. Cell wall formation. The protein is UDP-N-acetylmuramate--L-alanine ligase (murC) of Thermotoga maritima (strain ATCC 43589 / DSM 3109 / JCM 10099 / NBRC 100826 / MSB8).